The sequence spans 583 residues: Nuclear distribution protein nudE homolog 1 (583 aa).

Positions Ala14–Arg195 form a coiled coil. Disordered stretches follow at residues Leu34–Thr68, Thr211–Ser339, and His358–Tyr583. A compositionally biased stretch (basic and acidic residues) spans Ala35–Glu67. Composition is skewed to polar residues over residues Pro219–Lys235, Arg279–Thr319, Ser329–Ser339, Asn379–Ile392, and Ser399–Lys422. Low complexity predominate over residues Arg453–Pro469. Positions Arg529–Gly538 are enriched in polar residues.

Belongs to the nudE family. Self-associates. Interacts with PAC1.

Its subcellular location is the cytoplasm. It localises to the cytoskeleton. In terms of biological role, required for nuclear migration. The protein is Nuclear distribution protein nudE homolog 1 (NDE1) of Gibberella zeae (strain ATCC MYA-4620 / CBS 123657 / FGSC 9075 / NRRL 31084 / PH-1) (Wheat head blight fungus).